Reading from the N-terminus, the 97-residue chain is Nucleoid-associated protein Hac_0048 (97 aa).

It belongs to the YbaB/EbfC family. In terms of assembly, homodimer.

It is found in the cytoplasm. The protein resides in the nucleoid. Binds to DNA and alters its conformation. May be involved in regulation of gene expression, nucleoid organization and DNA protection. The protein is Nucleoid-associated protein Hac_0048 of Helicobacter acinonychis (strain Sheeba).